The chain runs to 525 residues: Protein KASH5 (525 aa).

Over 1–483 the chain is Cytoplasmic; that stretch reads MDMPEDQAGG…HLRRLRVTRH (483 aa). A disordered region spans residues 127 to 156; that stretch reads TSQQLPSGCPEVEDPANLESFGGEDPRPEL. The stretch at 164–360 forms a coiled coil; sequence SSLEDLELSN…LDELSEGAQV (197 aa). 2 disordered regions span residues 384–409 and 423–444; these read NLQE…REEE and HPED…PSEP. Residues 385–408 show a composition bias toward basic and acidic residues; the sequence is LQEESAHPQEGREEPSTRLPRREE. Residues 484–504 form a helical; Anchor for type IV membrane protein membrane-spanning segment; sequence LLIPAPLLGLLLLLLLSVLLL. Residues 505–525 are Perinuclear space-facing; the sequence is GQSPPPTWPHLQLCYLQPPPV.

In terms of assembly, core component the LINC complex which is composed of inner nuclear membrane SUN domain-containing proteins coupled to outer nuclear membrane KASH domain-containing nesprins. SUN and KASH domain-containing proteins seem to bind each other promiscuously; however, differentially expression of LINC complex constituents is giving rise to specific assemblies. At least SUN1/2-containing core LINC complexes are proposed to be hexameric composed of three protomers of each KASH and SUN domain-containing protein. Interacts with SUN1; this interaction mediates its telomere localization by forming a SUN1:KASH5 LINC complex. Component of a probable SUN2:KASH5 LINC complex. Self-associates. Interacts with DYNC1H1, DCTN1, DYNC1I1/2 and PAFAH1B1; suggesting the association with the dynein-dynactin motor complex.

The protein localises to the nucleus outer membrane. It localises to the nucleus. Its subcellular location is the chromosome. It is found in the telomere. The protein resides in the nucleus envelope. As a component of the LINC (LInker of Nucleoskeleton and Cytoskeleton) complex, involved in the connection between the nuclear lamina and the cytoskeleton. The nucleocytoplasmic interactions established by the LINC complex play an important role in the transmission of mechanical forces across the nuclear envelope and in nuclear movement and positioning. Required for telomere attachment to nuclear envelope in the prophase of meiosis and for rapid telomere prophase movements implicating a SUN1/2:KASH5 LINC complex in which SUN1 and SUN2 seem to act at least partial redundantly. Required for homolog pairing during meiotic prophase in spermatocytes and probably oocytes. Essential for male and female gametogenesis. Recruits cytoplasmic dynein to telomere attachment sites at the nuclear envelope in spermatocytes. In oocytes is involved in meiotic resumption and spindle formation. This is Protein KASH5 (KASH5) from Bos taurus (Bovine).